Reading from the N-terminus, the 236-residue chain is Small ribosomal subunit protein uS3 (236 aa).

One can recognise a KH type-2 domain in the interval 39-107 (IRKFLKKELY…EISINIKEVK (69 aa)). Basic and acidic residues predominate over residues 213-229 (QPEKKEEAPARDKEGRG). Positions 213–236 (QPEKKEEAPARDKEGRGTRRRGRQ) are disordered.

Belongs to the universal ribosomal protein uS3 family. As to quaternary structure, part of the 30S ribosomal subunit. Forms a tight complex with proteins S10 and S14.

In terms of biological role, binds the lower part of the 30S subunit head. Binds mRNA in the 70S ribosome, positioning it for translation. This Wolinella succinogenes (strain ATCC 29543 / DSM 1740 / CCUG 13145 / JCM 31913 / LMG 7466 / NCTC 11488 / FDC 602W) (Vibrio succinogenes) protein is Small ribosomal subunit protein uS3.